We begin with the raw amino-acid sequence, 191 residues long: Large ribosomal subunit protein uL29m (191 aa).

The protein belongs to the universal ribosomal protein uL29 family. In terms of assembly, component of the mitochondrial large ribosomal subunit. Mature mitochondrial ribosomes consist of a small (37S) and a large (54S) subunit. The 37S subunit contains at least 33 different proteins and 1 molecule of RNA (15S). The 54S subunit contains at least 45 different proteins and 1 molecule of RNA (21S).

Its subcellular location is the mitochondrion. In Sclerotinia sclerotiorum (strain ATCC 18683 / 1980 / Ss-1) (White mold), this protein is Large ribosomal subunit protein uL29m (MRPL4).